A 446-amino-acid polypeptide reads, in one-letter code: Tol-Pal system protein TolB (446 aa).

Residues 1-24 form the signal peptide; the sequence is MKRAFLSALSVGLAALFLTGPAQA.

It belongs to the TolB family. The Tol-Pal system is composed of five core proteins: the inner membrane proteins TolA, TolQ and TolR, the periplasmic protein TolB and the outer membrane protein Pal. They form a network linking the inner and outer membranes and the peptidoglycan layer.

The protein localises to the periplasm. Functionally, part of the Tol-Pal system, which plays a role in outer membrane invagination during cell division and is important for maintaining outer membrane integrity. The sequence is that of Tol-Pal system protein TolB from Dinoroseobacter shibae (strain DSM 16493 / NCIMB 14021 / DFL 12).